The chain runs to 278 residues: Undecaprenyl-diphosphatase 1 (278 aa).

Helical transmembrane passes span 46 to 66 (VVGF…VYFF), 91 to 111 (YTFT…GLAA), 119 to 139 (LASL…MWFA), 153 to 173 (SLPD…FPGF), 191 to 211 (VAAT…AGLY), 225 to 245 (PLAV…AWLL), and 256 to 276 (FIIY…GGAI).

It belongs to the UppP family.

It is found in the cell membrane. It carries out the reaction di-trans,octa-cis-undecaprenyl diphosphate + H2O = di-trans,octa-cis-undecaprenyl phosphate + phosphate + H(+). Functionally, catalyzes the dephosphorylation of undecaprenyl diphosphate (UPP). Confers resistance to bacitracin. This is Undecaprenyl-diphosphatase 1 from Frankia alni (strain DSM 45986 / CECT 9034 / ACN14a).